We begin with the raw amino-acid sequence, 286 residues long: 4-hydroxy-tetrahydrodipicolinate synthase (286 aa).

Threonine 42 is a pyruvate binding site. The Proton donor/acceptor role is filled by tyrosine 129. Lysine 157 functions as the Schiff-base intermediate with substrate in the catalytic mechanism. Valine 196 lines the pyruvate pocket.

This sequence belongs to the DapA family. As to quaternary structure, homotetramer; dimer of dimers.

The protein resides in the cytoplasm. The catalysed reaction is L-aspartate 4-semialdehyde + pyruvate = (2S,4S)-4-hydroxy-2,3,4,5-tetrahydrodipicolinate + H2O + H(+). It functions in the pathway amino-acid biosynthesis; L-lysine biosynthesis via DAP pathway; (S)-tetrahydrodipicolinate from L-aspartate: step 3/4. In terms of biological role, catalyzes the condensation of (S)-aspartate-beta-semialdehyde [(S)-ASA] and pyruvate to 4-hydroxy-tetrahydrodipicolinate (HTPA). This chain is 4-hydroxy-tetrahydrodipicolinate synthase, found in Chlamydia muridarum (strain MoPn / Nigg).